A 252-amino-acid chain; its full sequence is Receptor expression-enhancing protein 3-B (252 aa).

The next 3 membrane-spanning stretches (helical) occupy residues methionine 1–tyrosine 21, tyrosine 35–alanine 55, and leucine 57–leucine 77. Residues glutamate 163–serine 225 form a disordered region. Over residues arginine 198 to valine 211 the composition is skewed to acidic residues.

This sequence belongs to the DP1 family.

It is found in the endoplasmic reticulum membrane. Functionally, microtubule-binding protein required to ensure proper cell division and nuclear envelope reassembly by sequestering the endoplasmic reticulum away from chromosomes during mitosis. Probably acts by clearing the endoplasmic reticulum membrane from metaphase chromosomes. This chain is Receptor expression-enhancing protein 3-B (reep3-b), found in Xenopus laevis (African clawed frog).